The sequence spans 229 residues: Large ribosomal subunit protein uL1 (229 aa).

This sequence belongs to the universal ribosomal protein uL1 family. In terms of assembly, part of the 50S ribosomal subunit.

In terms of biological role, binds directly to 23S rRNA. The L1 stalk is quite mobile in the ribosome, and is involved in E site tRNA release. Functionally, protein L1 is also a translational repressor protein, it controls the translation of the L11 operon by binding to its mRNA. This Clostridium beijerinckii (strain ATCC 51743 / NCIMB 8052) (Clostridium acetobutylicum) protein is Large ribosomal subunit protein uL1.